The sequence spans 111 residues: Large ribosomal subunit protein uL22 (111 aa).

This sequence belongs to the universal ribosomal protein uL22 family. In terms of assembly, part of the 50S ribosomal subunit.

This protein binds specifically to 23S rRNA; its binding is stimulated by other ribosomal proteins, e.g. L4, L17, and L20. It is important during the early stages of 50S assembly. It makes multiple contacts with different domains of the 23S rRNA in the assembled 50S subunit and ribosome. In terms of biological role, the globular domain of the protein is located near the polypeptide exit tunnel on the outside of the subunit, while an extended beta-hairpin is found that lines the wall of the exit tunnel in the center of the 70S ribosome. The chain is Large ribosomal subunit protein uL22 from Chlamydia abortus (strain DSM 27085 / S26/3) (Chlamydophila abortus).